The sequence spans 351 residues: Uroporphyrinogen decarboxylase (351 aa).

Substrate is bound by residues 25–29 (RQAGR), Asp-74, Tyr-151, Ser-206, and His-325.

This sequence belongs to the uroporphyrinogen decarboxylase family. As to quaternary structure, homodimer.

The protein resides in the cytoplasm. The enzyme catalyses uroporphyrinogen III + 4 H(+) = coproporphyrinogen III + 4 CO2. The protein operates within porphyrin-containing compound metabolism; protoporphyrin-IX biosynthesis; coproporphyrinogen-III from 5-aminolevulinate: step 4/4. Its function is as follows. Catalyzes the decarboxylation of four acetate groups of uroporphyrinogen-III to yield coproporphyrinogen-III. The protein is Uroporphyrinogen decarboxylase of Prosthecochloris aestuarii (strain DSM 271 / SK 413).